Here is a 102-residue protein sequence, read N- to C-terminus: Large ribosomal subunit protein bL21 (102 aa).

Belongs to the bacterial ribosomal protein bL21 family. In terms of assembly, part of the 50S ribosomal subunit. Contacts protein L20.

Functionally, this protein binds to 23S rRNA in the presence of protein L20. The polypeptide is Large ribosomal subunit protein bL21 (Cutibacterium acnes (strain DSM 16379 / KPA171202) (Propionibacterium acnes)).